The sequence spans 453 residues: uncharacterized protein (453 aa).

Disordered regions lie at residues 183–210 and 428–453; these read GNGR…RSLS and PDSM…QYSK. Basic residues predominate over residues 198 to 207; the sequence is TKAHNYKTRR. Residues 433–453 show a composition bias toward polar residues; that stretch reads HPPTFSKNNTSSNPKSHQYSK.

This is an uncharacterized protein from Saccharomyces cerevisiae (strain ATCC 204508 / S288c) (Baker's yeast).